The primary structure comprises 277 residues: 4-hydroxy-3-methylbut-2-enyl diphosphate reductase (277 aa).

Residue C12 participates in [4Fe-4S] cluster binding. (2E)-4-hydroxy-3-methylbut-2-enyl diphosphate is bound by residues H36 and H70. 2 residues coordinate dimethylallyl diphosphate: H36 and H70. H36 and H70 together coordinate isopentenyl diphosphate. A [4Fe-4S] cluster-binding site is contributed by C92. Residue H120 participates in (2E)-4-hydroxy-3-methylbut-2-enyl diphosphate binding. H120 contacts dimethylallyl diphosphate. Position 120 (H120) interacts with isopentenyl diphosphate. E122 acts as the Proton donor in catalysis. T158 contributes to the (2E)-4-hydroxy-3-methylbut-2-enyl diphosphate binding site. C186 lines the [4Fe-4S] cluster pocket. S214, N216, and S258 together coordinate (2E)-4-hydroxy-3-methylbut-2-enyl diphosphate. Dimethylallyl diphosphate-binding residues include S214, N216, and S258. S214, N216, and S258 together coordinate isopentenyl diphosphate.

The protein belongs to the IspH family. It depends on [4Fe-4S] cluster as a cofactor.

The enzyme catalyses isopentenyl diphosphate + 2 oxidized [2Fe-2S]-[ferredoxin] + H2O = (2E)-4-hydroxy-3-methylbut-2-enyl diphosphate + 2 reduced [2Fe-2S]-[ferredoxin] + 2 H(+). It catalyses the reaction dimethylallyl diphosphate + 2 oxidized [2Fe-2S]-[ferredoxin] + H2O = (2E)-4-hydroxy-3-methylbut-2-enyl diphosphate + 2 reduced [2Fe-2S]-[ferredoxin] + 2 H(+). It functions in the pathway isoprenoid biosynthesis; dimethylallyl diphosphate biosynthesis; dimethylallyl diphosphate from (2E)-4-hydroxy-3-methylbutenyl diphosphate: step 1/1. It participates in isoprenoid biosynthesis; isopentenyl diphosphate biosynthesis via DXP pathway; isopentenyl diphosphate from 1-deoxy-D-xylulose 5-phosphate: step 6/6. Its function is as follows. Catalyzes the conversion of 1-hydroxy-2-methyl-2-(E)-butenyl 4-diphosphate (HMBPP) into a mixture of isopentenyl diphosphate (IPP) and dimethylallyl diphosphate (DMAPP). Acts in the terminal step of the DOXP/MEP pathway for isoprenoid precursor biosynthesis. This is 4-hydroxy-3-methylbut-2-enyl diphosphate reductase from Campylobacter jejuni subsp. doylei (strain ATCC BAA-1458 / RM4099 / 269.97).